Here is a 44-residue protein sequence, read N- to C-terminus: Conotoxin Rg11a (44 aa).

Cystine bridges form between cysteine 1/cysteine 15, cysteine 8/cysteine 22, cysteine 14/cysteine 30, and cysteine 21/cysteine 36.

As to expression, expressed by the venom duct.

Its subcellular location is the secreted. Its function is as follows. Neurotoxin. Elicits hypersensibility when injected intracranially in mice. May act via potassium channel currents. The sequence is that of Conotoxin Rg11a from Conus regius (Crown cone).